The following is a 171-amino-acid chain: Peptide deformylase (171 aa).

Residues cysteine 87 and histidine 129 each coordinate Fe cation. The active site involves glutamate 130. Histidine 133 contributes to the Fe cation binding site.

This sequence belongs to the polypeptide deformylase family. It depends on Fe(2+) as a cofactor.

It catalyses the reaction N-terminal N-formyl-L-methionyl-[peptide] + H2O = N-terminal L-methionyl-[peptide] + formate. Functionally, removes the formyl group from the N-terminal Met of newly synthesized proteins. Requires at least a dipeptide for an efficient rate of reaction. N-terminal L-methionine is a prerequisite for activity but the enzyme has broad specificity at other positions. This chain is Peptide deformylase, found in Pseudothermotoga lettingae (strain ATCC BAA-301 / DSM 14385 / NBRC 107922 / TMO) (Thermotoga lettingae).